The following is a 97-amino-acid chain: Large ribosomal subunit protein eL21 (97 aa).

Belongs to the eukaryotic ribosomal protein eL21 family.

In Methanosarcina barkeri (strain Fusaro / DSM 804), this protein is Large ribosomal subunit protein eL21.